A 141-amino-acid chain; its full sequence is 6,7-dimethyl-8-ribityllumazine synthase (141 aa).

5-amino-6-(D-ribitylamino)uracil is bound by residues Phe-13, 45-47 (SFE), and 69-71 (AII). 74 to 75 (DT) contributes to the (2S)-2-hydroxy-3-oxobutyl phosphate binding site. The active-site Proton donor is the His-77. Residue Leu-102 participates in 5-amino-6-(D-ribitylamino)uracil binding. Arg-117 serves as a coordination point for (2S)-2-hydroxy-3-oxobutyl phosphate.

This sequence belongs to the DMRL synthase family.

It carries out the reaction (2S)-2-hydroxy-3-oxobutyl phosphate + 5-amino-6-(D-ribitylamino)uracil = 6,7-dimethyl-8-(1-D-ribityl)lumazine + phosphate + 2 H2O + H(+). The protein operates within cofactor biosynthesis; riboflavin biosynthesis; riboflavin from 2-hydroxy-3-oxobutyl phosphate and 5-amino-6-(D-ribitylamino)uracil: step 1/2. Its function is as follows. Catalyzes the formation of 6,7-dimethyl-8-ribityllumazine by condensation of 5-amino-6-(D-ribitylamino)uracil with 3,4-dihydroxy-2-butanone 4-phosphate. This is the penultimate step in the biosynthesis of riboflavin. This chain is 6,7-dimethyl-8-ribityllumazine synthase, found in Methanopyrus kandleri (strain AV19 / DSM 6324 / JCM 9639 / NBRC 100938).